The sequence spans 37 residues: uncharacterized protein (37 aa).

Residues 17-37 (TFVLIVVLFILLIIVGAAFIC) traverse the membrane as a helical segment.

It belongs to the SscA family.

Its subcellular location is the membrane. This is an uncharacterized protein from Bacillus subtilis (strain 168).